The following is a 373-amino-acid chain: tRNA-specific 2-thiouridylase MnmA (373 aa).

Residues 12–19 (GMSGGVDS) and Met38 each bind ATP. An interaction with target base in tRNA region spans residues 98 to 100 (NPD). Catalysis depends on Cys103, which acts as the Nucleophile. A disulfide bridge connects residues Cys103 and Cys200. Gly127 is a binding site for ATP. The interval 150–152 (KDQ) is interaction with tRNA. Cys200 serves as the catalytic Cysteine persulfide intermediate. Residues 312 to 313 (RY) form an interaction with tRNA region.

This sequence belongs to the MnmA/TRMU family.

It localises to the cytoplasm. It carries out the reaction S-sulfanyl-L-cysteinyl-[protein] + uridine(34) in tRNA + AH2 + ATP = 2-thiouridine(34) in tRNA + L-cysteinyl-[protein] + A + AMP + diphosphate + H(+). Its function is as follows. Catalyzes the 2-thiolation of uridine at the wobble position (U34) of tRNA, leading to the formation of s(2)U34. The sequence is that of tRNA-specific 2-thiouridylase MnmA from Streptococcus pyogenes serotype M12 (strain MGAS2096).